Here is an 88-residue protein sequence, read N- to C-terminus: Gene 86 protein (88 aa).

Residues Trp-64–Tyr-88 are disordered. Over residues Tyr-71–Gly-80 the composition is skewed to acidic residues.

The polypeptide is Gene 86 protein (86) (Mycobacterium (Mycobacteriophage L5)).